The sequence spans 290 residues: 4-diphosphocytidyl-2-C-methyl-D-erythritol kinase (290 aa).

Residue lysine 13 is part of the active site. 96 to 106 (PMGGGIGGGSS) is an ATP binding site. The active site involves aspartate 138.

The protein belongs to the GHMP kinase family. IspE subfamily.

It catalyses the reaction 4-CDP-2-C-methyl-D-erythritol + ATP = 4-CDP-2-C-methyl-D-erythritol 2-phosphate + ADP + H(+). The protein operates within isoprenoid biosynthesis; isopentenyl diphosphate biosynthesis via DXP pathway; isopentenyl diphosphate from 1-deoxy-D-xylulose 5-phosphate: step 3/6. Its function is as follows. Catalyzes the phosphorylation of the position 2 hydroxy group of 4-diphosphocytidyl-2C-methyl-D-erythritol. This Vibrio vulnificus (strain CMCP6) protein is 4-diphosphocytidyl-2-C-methyl-D-erythritol kinase.